We begin with the raw amino-acid sequence, 215 residues long: NAD(P)H-hydrate epimerase (215 aa).

Residues 8-212 (MYNIENKGHD…KIGIPPEAEE (205 aa)) enclose the YjeF N-terminal domain. (6S)-NADPHX is bound at residue 57–61 (NNGGD). Asparagine 58 and aspartate 124 together coordinate K(+). Residues 128–134 (GTGISGE), tyrosine 139, and aspartate 157 contribute to the (6S)-NADPHX site. Serine 160 contacts K(+).

This sequence belongs to the NnrE/AIBP family. K(+) serves as cofactor.

The catalysed reaction is (6R)-NADHX = (6S)-NADHX. The enzyme catalyses (6R)-NADPHX = (6S)-NADPHX. Functionally, catalyzes the epimerization of the S- and R-forms of NAD(P)HX, a damaged form of NAD(P)H that is a result of enzymatic or heat-dependent hydration. This is a prerequisite for the S-specific NAD(P)H-hydrate dehydratase to allow the repair of both epimers of NAD(P)HX. This is NAD(P)H-hydrate epimerase from Nitrosopumilus maritimus (strain SCM1).